Consider the following 324-residue polypeptide: Cytosolic sulfotransferase 13 (324 aa).

Position 76 to 81 (lysine 76 to tryptophan 81) interacts with 3'-phosphoadenylyl sulfate. Catalysis depends on histidine 134, which acts as the Proton acceptor. 3'-phosphoadenylyl sulfate contacts are provided by residues arginine 156, serine 164, tyrosine 222, and arginine 288–glycine 290.

This sequence belongs to the sulfotransferase 1 family.

The protein localises to the cytoplasm. Its function is as follows. Sulfotransferase that utilizes 3'-phospho-5'-adenylyl sulfate (PAPS) as sulfonate donor. This Arabidopsis thaliana (Mouse-ear cress) protein is Cytosolic sulfotransferase 13 (SOT13).